A 192-amino-acid chain; its full sequence is Potassium-transporting ATPase KdpC subunit (192 aa).

A helical transmembrane segment spans residues 7–27 (PLIVLFVVLAALTGLAYPAVM).

It belongs to the KdpC family. In terms of assembly, the system is composed of three essential subunits: KdpA, KdpB and KdpC.

It is found in the cell inner membrane. Functionally, part of the high-affinity ATP-driven potassium transport (or Kdp) system, which catalyzes the hydrolysis of ATP coupled with the electrogenic transport of potassium into the cytoplasm. This subunit acts as a catalytic chaperone that increases the ATP-binding affinity of the ATP-hydrolyzing subunit KdpB by the formation of a transient KdpB/KdpC/ATP ternary complex. In Paraburkholderia xenovorans (strain LB400), this protein is Potassium-transporting ATPase KdpC subunit.